Consider the following 226-residue polypeptide: Cytidylate kinase (226 aa).

10-18 (GPAGAGKST) contributes to the ATP binding site.

It belongs to the cytidylate kinase family. Type 1 subfamily.

It is found in the cytoplasm. It carries out the reaction CMP + ATP = CDP + ADP. The enzyme catalyses dCMP + ATP = dCDP + ADP. The protein is Cytidylate kinase of Caldicellulosiruptor bescii (strain ATCC BAA-1888 / DSM 6725 / KCTC 15123 / Z-1320) (Anaerocellum thermophilum).